The sequence spans 296 residues: Probable lipid kinase YegS-like (296 aa).

Residues 1–130 (MPHTLLILNG…IDLAQVNGEH (130 aa)) enclose the DAGKc domain. ATP-binding positions include Thr-37, 63–69 (GDGTINE), and Thr-92. 3 residues coordinate Mg(2+): Leu-212, Asp-215, and Leu-217. Residue Glu-268 is the Proton acceptor of the active site.

Belongs to the diacylglycerol/lipid kinase family. YegS lipid kinase subfamily. Mg(2+) serves as cofactor. Ca(2+) is required as a cofactor.

The protein localises to the cytoplasm. Functionally, probably phosphorylates lipids; the in vivo substrate is unknown. The sequence is that of Probable lipid kinase YegS-like from Yersinia pseudotuberculosis serotype I (strain IP32953).